A 147-amino-acid polypeptide reads, in one-letter code: Large ribosomal subunit protein bL9 (147 aa).

It belongs to the bacterial ribosomal protein bL9 family.

In terms of biological role, binds to the 23S rRNA. In Clostridium tetani (strain Massachusetts / E88), this protein is Large ribosomal subunit protein bL9.